The chain runs to 237 residues: MKKHRLPDTELARIAPLAPDARRKALLKFKNGFPDFSYEPTRRRLPELTNAQPSLLSLGDTEWSKIESGLKRLKNEKEAASNIEVAELLYNFIREEKYIAVMEPFGKLQLGAGVAISYWSDAIFFGPDGPTIFGFDFRRAGGFNDSARRFAFSAQHEHIRQRGDDYATAKLGLVQFPALRNGTRKVRVEFADQVELIPYDELIQMARETYSVWFEILEQREDEARKTGTGGSWWDGD.

Interacts with cognate antitoxin SocA and with beta sliding clamp (dnaN). Degraded by ClpXP, recognition of SocB by ClpX requires SocA.

Its subcellular location is the cytoplasm. Toxic component of an atypical type II toxin-antitoxin (TA) system. Upon overexpression in the absence of its cognate antitoxin SocA, leads to inhibition of colony formation, cellular filamentation, incomplete DNA replication and induction of the SOS response. Exercises toxicity by binding the beta sliding clamp (dnaN), blocking DNA replication and leading to premature replication fork collapse and incomplete cell division. Unlike most type II TA systems, the SocB toxin is unstable and targeted by its cognate antitoxin SocA for degradation by ClpXP. Not toxic upon expression in E.coli. The polypeptide is DNA replication inhibitor toxin SocB (Caulobacter vibrioides (strain NA1000 / CB15N) (Caulobacter crescentus)).